The chain runs to 134 residues: Large ribosomal subunit protein bL17 (134 aa).

Belongs to the bacterial ribosomal protein bL17 family. As to quaternary structure, part of the 50S ribosomal subunit. Contacts protein L32.

This Anaplasma marginale (strain Florida) protein is Large ribosomal subunit protein bL17.